Consider the following 206-residue polypeptide: Endoribonuclease YbeY (206 aa).

The tract at residues 1–20 (MSQANHNDTHNNIDDNINNH) is disordered. Zn(2+) contacts are provided by His168, His172, and His178.

The protein belongs to the endoribonuclease YbeY family. It depends on Zn(2+) as a cofactor.

It localises to the cytoplasm. Single strand-specific metallo-endoribonuclease involved in late-stage 70S ribosome quality control and in maturation of the 3' terminus of the 16S rRNA. This chain is Endoribonuclease YbeY, found in Psychrobacter arcticus (strain DSM 17307 / VKM B-2377 / 273-4).